The following is a 999-amino-acid chain: Protein hir1 (999 aa).

WD repeat units lie at residues 15 to 54 (LVVHDSSSSWHGPLTPTLLSTGERKDFEVYSCDVSPDGSR), 69 to 108 (TEAIRNTDDSSQKPKQLASMSNHSGTIHTVRFSPNGKYLA), 130 to 169 (TFGWSYDSSILVSVGLDSKVVVWSGHTFEKLKTLSVHQSH), 172 to 211 (GITFDPANKYFATASDDRTVKIFRFTSPAPNSTAHDQMNN), 233 to 276 (RCSW…HEAP), 279 to 339 (VCAF…KSIS), and 343 to 384 (WSPD…SLTK). The span at 439–468 (LSSNGAAPAQGTSPTADAQKTQTNGTTTPA) shows a compositional bias: polar residues. Positions 439–476 (LSSNGAAPAQGTSPTADAQKTQTNGTTTPAAQEADKPD) are disordered.

It belongs to the WD repeat HIR1 family.

The protein localises to the nucleus. Required for replication-independent chromatin assembly and for the periodic repression of histone gene transcription during the cell cycle. The chain is Protein hir1 (hir1) from Aspergillus terreus (strain NIH 2624 / FGSC A1156).